The following is an 881-amino-acid chain: Alanine--tRNA ligase (881 aa).

Residues His-568, His-572, Cys-670, and His-674 each contribute to the Zn(2+) site.

The protein belongs to the class-II aminoacyl-tRNA synthetase family. Zn(2+) is required as a cofactor.

It localises to the cytoplasm. The catalysed reaction is tRNA(Ala) + L-alanine + ATP = L-alanyl-tRNA(Ala) + AMP + diphosphate. Its function is as follows. Catalyzes the attachment of alanine to tRNA(Ala) in a two-step reaction: alanine is first activated by ATP to form Ala-AMP and then transferred to the acceptor end of tRNA(Ala). Also edits incorrectly charged Ser-tRNA(Ala) and Gly-tRNA(Ala) via its editing domain. The chain is Alanine--tRNA ligase from Moorella thermoacetica (strain ATCC 39073 / JCM 9320).